Reading from the N-terminus, the 448-residue chain is NADP-specific glutamate dehydrogenase (448 aa).

Substrate-binding residues include Lys88, Gln109, and Lys112. Lys124 acts as the Proton donor in catalysis. Gly163 provides a ligand contact to substrate. NADP(+) is bound by residues Thr207 and Asn238. Residue Ser375 coordinates substrate.

This sequence belongs to the Glu/Leu/Phe/Val dehydrogenases family. Homohexamer.

It carries out the reaction L-glutamate + NADP(+) + H2O = 2-oxoglutarate + NH4(+) + NADPH + H(+). Catalyzes the reversible oxidative deamination of glutamate to alpha-ketoglutarate and ammonia. This chain is NADP-specific glutamate dehydrogenase (gdhA), found in Psychrobacter sp. (strain TAD1).